A 213-amino-acid chain; its full sequence is Leucine-rich repeat protein 1 (213 aa).

The first 21 residues, 1–21 (MGAGALGVVAMVAAAVVVAMA), serve as a signal peptide directing secretion. LRR repeat units follow at residues 90–113 (DHLQYLELYKNNIQGTIPSELGNL), 115–137 (NLISLDLYKNNISGTIPPTLGKL), 138–161 (TSLVFLRLNGNRLTGPIPRELAGI), and 163–186 (SLKVVDVSSNDLCGTIPTSGPFEH).

In terms of assembly, interacts with HIR1.

The protein resides in the early endosome membrane. Its subcellular location is the late endosome membrane. The protein localises to the cell membrane. Functionally, involved in plant defense response. The chain is Leucine-rich repeat protein 1 from Oryza sativa subsp. indica (Rice).